The chain runs to 178 residues: Riboflavin kinase (178 aa).

Mg(2+)-binding residues include Thr-39 and Asn-41. The Nucleophile role is filled by Glu-116.

It belongs to the flavokinase family. Zn(2+) serves as cofactor. Requires Mg(2+) as cofactor.

It carries out the reaction riboflavin + ATP = FMN + ADP + H(+). Its pathway is cofactor biosynthesis; FMN biosynthesis; FMN from riboflavin (ATP route): step 1/1. Functionally, catalyzes the phosphorylation of riboflavin (vitamin B2) to form flavin mononucleotide (FMN) coenzyme. The polypeptide is Riboflavin kinase (FMN1) (Scheffersomyces stipitis (strain ATCC 58785 / CBS 6054 / NBRC 10063 / NRRL Y-11545) (Yeast)).